The sequence spans 243 residues: Cell division protein ZipA (243 aa).

Over Met-1–Met-4 the chain is Periplasmic. A helical membrane pass occupies residues Ala-5 to Phe-25. Residues Gly-26–Trp-243 are Cytoplasmic-facing. The segment at Lys-30–Lys-89 is disordered. Basic and acidic residues predominate over residues Arg-35–Pro-50.

This sequence belongs to the ZipA family. As to quaternary structure, interacts with FtsZ via their C-terminal domains.

The protein resides in the cell inner membrane. In terms of biological role, essential cell division protein that stabilizes the FtsZ protofilaments by cross-linking them and that serves as a cytoplasmic membrane anchor for the Z ring. Also required for the recruitment to the septal ring of downstream cell division proteins. The polypeptide is Cell division protein ZipA (Xanthomonas axonopodis pv. citri (strain 306)).